We begin with the raw amino-acid sequence, 395 residues long: MQNELQTALFQAFDTLNLQRVKTFSVPPVTLCGPGSVSSCGQQAQTRGLKHLFVMADSFLHQAGMTAGLTRSLTVKGIAMTLWPCPVGEPCITDVCAAVAQLRESGCDGVIAFGGGSVLDAAKAVTLLVTNPDSTLAEMSETSVLQPRLPLIAIPTTAGTGSETTNVTVIIDAVSGRKQVLAHASLMPDVAILDAALTEGVPSHVTAMTGIDALTHAIEAYSALNATPFTDSLAIGAIAMIGKSLPKAVGYGHDLAARESMLLASCMAGMAFSSAGLGLCHAMAHQPGAALHIPHGLANAMLLPTVMEFNRMVCRERFSQIGRALRTKKSDDRDAINAVSELIAEVGIGKRLGDVGATSAHYGAWAQAALEDICLRSNPRTASLEQIVGLYAAAQ.

NAD(+) is bound by residues D57, 116–120, 156–160, K178, and 197–201; these read GSVLD, TTAGT, and LTEGV. D212, H216, H281, and H295 together coordinate Fe cation. The NAD(+) site is built by H295 and D354.

The protein belongs to the iron-containing alcohol dehydrogenase family. Fe cation serves as cofactor.

The protein resides in the bacterial microcompartment. The enzyme catalyses ethanol + NAD(+) = acetaldehyde + NADH + H(+). Its pathway is amine and polyamine degradation; ethanolamine degradation. Its function is as follows. May act on the acetaldehyde produced from the degradation of ethanolamine, producing ethanol. Active on acetaldehyde and isobutyraldehyde in vitro. In vitro works equally well with NADH or NADPH. The protein is Probable alcohol dehydrogenase EutG (eutG) of Escherichia coli (strain K12).